The chain runs to 286 residues: Pantothenate synthetase (286 aa).

An ATP-binding site is contributed by 31 to 38; that stretch reads MGALHDGH. Catalysis depends on histidine 38, which acts as the Proton donor. A (R)-pantoate-binding site is contributed by glutamine 62. Glutamine 62 contacts beta-alanine. ATP is bound at residue 148-151; that stretch reads GKKD. Glutamine 154 contributes to the (R)-pantoate binding site. Residues valine 177 and 185–188 contribute to the ATP site; that span reads KSSR.

It belongs to the pantothenate synthetase family. In terms of assembly, homodimer.

It is found in the cytoplasm. The catalysed reaction is (R)-pantoate + beta-alanine + ATP = (R)-pantothenate + AMP + diphosphate + H(+). It participates in cofactor biosynthesis; (R)-pantothenate biosynthesis; (R)-pantothenate from (R)-pantoate and beta-alanine: step 1/1. Functionally, catalyzes the condensation of pantoate with beta-alanine in an ATP-dependent reaction via a pantoyl-adenylate intermediate. This chain is Pantothenate synthetase, found in Staphylococcus epidermidis (strain ATCC 35984 / DSM 28319 / BCRC 17069 / CCUG 31568 / BM 3577 / RP62A).